Consider the following 203-residue polypeptide: Histidine biosynthesis bifunctional protein HisIE (203 aa).

Positions 1–114 are phosphoribosyl-AMP cyclohydrolase; that stretch reads MLTEQQRREL…FGDTAHQWLF (114 aa). The interval 115-203 is phosphoribosyl-ATP pyrophosphohydrolase; it reads LYQLEQLLAE…VIENLRKRHQ (89 aa).

It in the N-terminal section; belongs to the PRA-CH family. In the C-terminal section; belongs to the PRA-PH family.

The protein resides in the cytoplasm. It carries out the reaction 1-(5-phospho-beta-D-ribosyl)-ATP + H2O = 1-(5-phospho-beta-D-ribosyl)-5'-AMP + diphosphate + H(+). The enzyme catalyses 1-(5-phospho-beta-D-ribosyl)-5'-AMP + H2O = 1-(5-phospho-beta-D-ribosyl)-5-[(5-phospho-beta-D-ribosylamino)methylideneamino]imidazole-4-carboxamide. It participates in amino-acid biosynthesis; L-histidine biosynthesis; L-histidine from 5-phospho-alpha-D-ribose 1-diphosphate: step 2/9. Its pathway is amino-acid biosynthesis; L-histidine biosynthesis; L-histidine from 5-phospho-alpha-D-ribose 1-diphosphate: step 3/9. In Escherichia coli (strain K12), this protein is Histidine biosynthesis bifunctional protein HisIE (hisI).